A 367-amino-acid chain; its full sequence is Methylthioribose-1-phosphate isomerase (367 aa).

Residues 54-56 (RGA), arginine 91, and glutamine 201 contribute to the substrate site. The active-site Proton donor is aspartate 242. 252 to 253 (NK) serves as a coordination point for substrate.

Belongs to the eIF-2B alpha/beta/delta subunits family. MtnA subfamily.

The catalysed reaction is 5-(methylsulfanyl)-alpha-D-ribose 1-phosphate = 5-(methylsulfanyl)-D-ribulose 1-phosphate. It functions in the pathway amino-acid biosynthesis; L-methionine biosynthesis via salvage pathway; L-methionine from S-methyl-5-thio-alpha-D-ribose 1-phosphate: step 1/6. Catalyzes the interconversion of methylthioribose-1-phosphate (MTR-1-P) into methylthioribulose-1-phosphate (MTRu-1-P). This chain is Methylthioribose-1-phosphate isomerase, found in Acidiphilium cryptum (strain JF-5).